A 444-amino-acid chain; its full sequence is Methylenetetrahydrofolate--tRNA-(uracil-5-)-methyltransferase TrmFO (444 aa).

10–15 is a binding site for FAD; sequence GAGLAG.

This sequence belongs to the MnmG family. TrmFO subfamily. FAD serves as cofactor.

It localises to the cytoplasm. It carries out the reaction uridine(54) in tRNA + (6R)-5,10-methylene-5,6,7,8-tetrahydrofolate + NADH + H(+) = 5-methyluridine(54) in tRNA + (6S)-5,6,7,8-tetrahydrofolate + NAD(+). It catalyses the reaction uridine(54) in tRNA + (6R)-5,10-methylene-5,6,7,8-tetrahydrofolate + NADPH + H(+) = 5-methyluridine(54) in tRNA + (6S)-5,6,7,8-tetrahydrofolate + NADP(+). Catalyzes the folate-dependent formation of 5-methyl-uridine at position 54 (M-5-U54) in all tRNAs. This is Methylenetetrahydrofolate--tRNA-(uracil-5-)-methyltransferase TrmFO from Streptococcus pneumoniae serotype 4 (strain ATCC BAA-334 / TIGR4).